Here is a 182-residue protein sequence, read N- to C-terminus: Large ribosomal subunit protein uL13 (182 aa).

This sequence belongs to the universal ribosomal protein uL13 family. In terms of assembly, part of the 50S ribosomal subunit.

Functionally, this protein is one of the early assembly proteins of the 50S ribosomal subunit, although it is not seen to bind rRNA by itself. It is important during the early stages of 50S assembly. The polypeptide is Large ribosomal subunit protein uL13 (Pyrobaculum neutrophilum (strain DSM 2338 / JCM 9278 / NBRC 100436 / V24Sta) (Thermoproteus neutrophilus)).